The sequence spans 477 residues: Interferon gamma receptor 1 (477 aa).

The N-terminal stretch at 1 to 25 (MGPQAAAGRMILLVVLMLSAKVGSG) is a signal peptide. The Extracellular portion of the chain corresponds to 26–254 (ALTSTEDPEP…PPFHDDRKDS (229 aa)). Asn-61 and Asn-85 each carry an N-linked (GlcNAc...) asparagine glycan. 4 cysteine pairs are disulfide-bonded: Cys-83-Cys-91, Cys-128-Cys-174, Cys-203-Cys-208, and Cys-222-Cys-243. Residues 255–275 (IWILVVAPLTVFTVVILVFAY) traverse the membrane as a helical segment. Residues 276-477 (WYTKKNSFKR…RLTGEAQELS (202 aa)) lie on the Cytoplasmic side of the membrane. Disordered stretches follow at residues 335–386 (TVTA…LSSN) and 402–446 (SDSG…SGYD). The residue at position 362 (Ser-362) is a Phosphoserine. Thr-367 is subject to Phosphothreonine. Position 370 is a phosphoserine (Ser-370). Residues Thr-373 and Thr-375 each carry the phosphothreonine modification. Polar residues predominate over residues 375 to 386 (TQRRSFSLLSSN). A phosphoserine mark is found at Ser-379 and Ser-402. Residues 402–416 (SDSGLVGSGSSISDL) are compositionally biased toward low complexity. Residue Tyr-445 is modified to Phosphotyrosine.

This sequence belongs to the type II cytokine receptor family. Monomer. Heterodimer with IFNGR2, to form the IFNG receptor complex. Interacts with JAK1. Interacts (when phosphorylated) with STAT1. Interacts with SOCS1. In terms of processing, phosphorylated at Ser/Thr residues. Phosphorylation of Tyr-445 is required for IFNG receptor signal transduction. Influenza virus infection leads to phosphorylation in a CSNK1A1-dependent manner. Post-translationally, ubiquitinated after phosphorylation in a CSNK1A1-dependent manner, leading to the lysosome-dependent degradation. Proteasomally degraded through 'Lys-48'-mediated ubiquitination. Ubiquitination is necessary for efficient IFNGR1 signaling.

The protein localises to the cell membrane. Receptor subunit for interferon gamma/INFG that plays crucial roles in antimicrobial, antiviral, and antitumor responses by activating effector immune cells and enhancing antigen presentation (, PubMed:20926559, PubMed:27286456). Associates with transmembrane accessory factor IFNGR2 to form a functional receptor. Upon ligand binding, the intracellular domain of IFNGR1 opens out to allow association of downstream signaling components JAK1 and JAK2. In turn, activated JAK1 phosphorylates IFNGR1 to form a docking site for STAT1. Subsequent phosphorylation of STAT1 leads to its dimerization, translocation to the nucleus, and stimulation of target gene transcription. STAT3 can also be activated in a similar manner although activation seems weaker. IFNGR1 intracellular domain phosphorylation also provides a docking site for SOCS1 that regulates the JAK-STAT pathway by competing with STAT1 binding to IFNGR1. This is Interferon gamma receptor 1 from Mus musculus (Mouse).